The following is a 258-amino-acid chain: Imidazole glycerol phosphate synthase subunit HisF (258 aa).

Residues Asp11 and Asp130 contribute to the active site.

This sequence belongs to the HisA/HisF family. As to quaternary structure, heterodimer of HisH and HisF.

It localises to the cytoplasm. It carries out the reaction 5-[(5-phospho-1-deoxy-D-ribulos-1-ylimino)methylamino]-1-(5-phospho-beta-D-ribosyl)imidazole-4-carboxamide + L-glutamine = D-erythro-1-(imidazol-4-yl)glycerol 3-phosphate + 5-amino-1-(5-phospho-beta-D-ribosyl)imidazole-4-carboxamide + L-glutamate + H(+). The protein operates within amino-acid biosynthesis; L-histidine biosynthesis; L-histidine from 5-phospho-alpha-D-ribose 1-diphosphate: step 5/9. Functionally, IGPS catalyzes the conversion of PRFAR and glutamine to IGP, AICAR and glutamate. The HisF subunit catalyzes the cyclization activity that produces IGP and AICAR from PRFAR using the ammonia provided by the HisH subunit. The protein is Imidazole glycerol phosphate synthase subunit HisF of Nitrobacter hamburgensis (strain DSM 10229 / NCIMB 13809 / X14).